The chain runs to 109 residues: uncharacterized protein (109 aa).

The helical transmembrane segment at 75 to 95 (LHFFFLFWLLNFILFFRIHLY) threads the bilayer.

It localises to the membrane. This is an uncharacterized protein from Schizosaccharomyces pombe (strain 972 / ATCC 24843) (Fission yeast).